The following is a 373-amino-acid chain: 1-deoxy-D-xylulose 5-phosphate reductoisomerase (373 aa).

The NADPH site is built by threonine 10, glycine 11, serine 12, isoleucine 13, arginine 37, and asparagine 112. Position 113 (lysine 113) interacts with 1-deoxy-D-xylulose 5-phosphate. Glutamate 114 lines the NADPH pocket. Aspartate 134 contacts Mn(2+). The 1-deoxy-D-xylulose 5-phosphate site is built by serine 135, glutamate 136, serine 160, and histidine 183. Position 136 (glutamate 136) interacts with Mn(2+). Glycine 189 is a binding site for NADPH. 1-deoxy-D-xylulose 5-phosphate contacts are provided by serine 196, asparagine 201, lysine 202, and glutamate 205. Glutamate 205 contributes to the Mn(2+) binding site.

Belongs to the DXR family. Mg(2+) is required as a cofactor. The cofactor is Mn(2+).

It carries out the reaction 2-C-methyl-D-erythritol 4-phosphate + NADP(+) = 1-deoxy-D-xylulose 5-phosphate + NADPH + H(+). The protein operates within isoprenoid biosynthesis; isopentenyl diphosphate biosynthesis via DXP pathway; isopentenyl diphosphate from 1-deoxy-D-xylulose 5-phosphate: step 1/6. Catalyzes the NADPH-dependent rearrangement and reduction of 1-deoxy-D-xylulose-5-phosphate (DXP) to 2-C-methyl-D-erythritol 4-phosphate (MEP). This is 1-deoxy-D-xylulose 5-phosphate reductoisomerase from Persephonella marina (strain DSM 14350 / EX-H1).